A 202-amino-acid polypeptide reads, in one-letter code: Glycerol-3-phosphate acyltransferase (202 aa).

A run of 5 helical transmembrane segments spans residues 11-31 (LLLFWGGIGYLLGSVPFGMVI), 60-80 (AAAAATLLLDGGKGAAAVLLA), 88-108 (AAQLAGLLAFLGHCFPVWLGF), 117-137 (FLGLMLALAWPVGIACCLTWL), and 162-182 (LLLGAPQAAVLSALLALVILW).

Belongs to the PlsY family. In terms of assembly, probably interacts with PlsX.

It is found in the cell inner membrane. It catalyses the reaction an acyl phosphate + sn-glycerol 3-phosphate = a 1-acyl-sn-glycero-3-phosphate + phosphate. The protein operates within lipid metabolism; phospholipid metabolism. Functionally, catalyzes the transfer of an acyl group from acyl-phosphate (acyl-PO(4)) to glycerol-3-phosphate (G3P) to form lysophosphatidic acid (LPA). This enzyme utilizes acyl-phosphate as fatty acyl donor, but not acyl-CoA or acyl-ACP. The polypeptide is Glycerol-3-phosphate acyltransferase (Ruegeria sp. (strain TM1040) (Silicibacter sp.)).